A 681-amino-acid chain; its full sequence is DNA-directed RNA polymerase subunit beta' (681 aa).

Residues C69, C71, C87, and C90 each coordinate Zn(2+). 3 residues coordinate Mg(2+): D489, D491, and D493.

This sequence belongs to the RNA polymerase beta' chain family. RpoC1 subfamily. In plastids the minimal PEP RNA polymerase catalytic core is composed of four subunits: alpha, beta, beta', and beta''. When a (nuclear-encoded) sigma factor is associated with the core the holoenzyme is formed, which can initiate transcription. Mg(2+) serves as cofactor. It depends on Zn(2+) as a cofactor.

It localises to the plastid. It is found in the chloroplast. It catalyses the reaction RNA(n) + a ribonucleoside 5'-triphosphate = RNA(n+1) + diphosphate. Functionally, DNA-dependent RNA polymerase catalyzes the transcription of DNA into RNA using the four ribonucleoside triphosphates as substrates. This is DNA-directed RNA polymerase subunit beta' from Nicotiana tomentosiformis (Tobacco).